The primary structure comprises 156 residues: 3-hydroxyacyl-[acyl-carrier-protein] dehydratase FabZ (156 aa).

His62 is a catalytic residue.

Belongs to the thioester dehydratase family. FabZ subfamily.

It localises to the cytoplasm. It carries out the reaction a (3R)-hydroxyacyl-[ACP] = a (2E)-enoyl-[ACP] + H2O. Its function is as follows. Involved in unsaturated fatty acids biosynthesis. Catalyzes the dehydration of short chain beta-hydroxyacyl-ACPs and long chain saturated and unsaturated beta-hydroxyacyl-ACPs. The chain is 3-hydroxyacyl-[acyl-carrier-protein] dehydratase FabZ from Parasynechococcus marenigrum (strain WH8102).